Consider the following 206-residue polypeptide: Superoxide dismutase [Mn] (206 aa).

Residues histidine 27, histidine 82, aspartate 168, and histidine 172 each coordinate Mn(2+).

This sequence belongs to the iron/manganese superoxide dismutase family. In terms of assembly, homodimer. Mn(2+) serves as cofactor.

The enzyme catalyses 2 superoxide + 2 H(+) = H2O2 + O2. Its function is as follows. Destroys superoxide anion radicals which are normally produced within the cells and which are toxic to biological systems. In Escherichia coli O157:H7, this protein is Superoxide dismutase [Mn] (sodA).